The following is a 145-amino-acid chain: UPF0201 protein STK_09490 (145 aa).

It belongs to the UPF0201 family.

In Sulfurisphaera tokodaii (strain DSM 16993 / JCM 10545 / NBRC 100140 / 7) (Sulfolobus tokodaii), this protein is UPF0201 protein STK_09490.